Here is a 307-residue protein sequence, read N- to C-terminus: tRNA pseudouridine synthase B (307 aa).

Catalysis depends on Asp-41, which acts as the Nucleophile.

The protein belongs to the pseudouridine synthase TruB family. Type 1 subfamily.

It catalyses the reaction uridine(55) in tRNA = pseudouridine(55) in tRNA. Functionally, responsible for synthesis of pseudouridine from uracil-55 in the psi GC loop of transfer RNAs. The polypeptide is tRNA pseudouridine synthase B (Prochlorococcus marinus (strain MIT 9312)).